Reading from the N-terminus, the 528-residue chain is Cytochrome P450 monooxygenase polB (528 aa).

Residues 3–23 traverse the membrane as a helical segment; it reads SFFLVCPVAFLGFTICYLVYV. Residue cysteine 473 participates in heme binding.

Belongs to the cytochrome P450 family. Heme serves as cofactor.

The protein localises to the membrane. It carries out the reaction 4beta-carboxyl motiol + reduced [NADPH--hemoprotein reductase] + O2 = 2alpha-hydroxyl, 4beta-carboxyl motiol + oxidized [NADPH--hemoprotein reductase] + H2O + H(+). It catalyses the reaction 2-deoxypolytolypin + reduced [NADPH--hemoprotein reductase] + O2 = polytolypin + oxidized [NADPH--hemoprotein reductase] + H2O + H(+). It functions in the pathway secondary metabolite biosynthesis; terpenoid biosynthesis. In terms of biological role, cytochrome P450 monooxygenase; part of the gene cluster that mediates the biosynthesis of antifungal fernane-type triterpenoid polytolypin. PolB acts as a hydroxylase and installs the 2-alpha-hydroxyl group in polytolypin. Within the pathway, the triterpene cyclase polA first catalyzes the cyclization of 2,3-oxidosqualene to motiol, polC converts the 4-alpha-methyl group of motiol to a carboxyl group, polB is responsible for appending a hydroxyl group at the 2-alpha position and polE is a dual functional P450, which can catalyze the formation of both the 1-beta-hydroxyl group and 10-beta-carboxyl group. The chain is Cytochrome P450 monooxygenase polB from Polytolypa hystricis (strain UAMH7299).